The following is a 398-amino-acid chain: 4-hydroxy-3-methylbut-2-en-1-yl diphosphate synthase (ferredoxin) (398 aa).

[4Fe-4S] cluster-binding residues include C306, C309, C340, and E347.

This sequence belongs to the IspG family. [4Fe-4S] cluster serves as cofactor.

It carries out the reaction (2E)-4-hydroxy-3-methylbut-2-enyl diphosphate + 2 oxidized [2Fe-2S]-[ferredoxin] + H2O = 2-C-methyl-D-erythritol 2,4-cyclic diphosphate + 2 reduced [2Fe-2S]-[ferredoxin] + H(+). Its pathway is isoprenoid biosynthesis; isopentenyl diphosphate biosynthesis via DXP pathway; isopentenyl diphosphate from 1-deoxy-D-xylulose 5-phosphate: step 5/6. Its function is as follows. Converts 2C-methyl-D-erythritol 2,4-cyclodiphosphate (ME-2,4cPP) into 1-hydroxy-2-methyl-2-(E)-butenyl 4-diphosphate. In Synechococcus sp. (strain CC9605), this protein is 4-hydroxy-3-methylbut-2-en-1-yl diphosphate synthase (ferredoxin).